The sequence spans 373 residues: Protein phosphatase 1K, mitochondrial (373 aa).

Residues 95–347 (KVGCSTQLGK…DNSTAIVVPF (253 aa)) form the PPM-type phosphatase domain. Mg(2+) is bound by residues Asp-128, Gly-129, and Asp-338.

This sequence belongs to the PP2C family. It depends on Mg(2+) as a cofactor. Requires Mn(2+) as cofactor.

It is found in the mitochondrion matrix. It catalyses the reaction O-phospho-L-seryl-[protein] + H2O = L-seryl-[protein] + phosphate. It carries out the reaction O-phospho-L-threonyl-[protein] + H2O = L-threonyl-[protein] + phosphate. This chain is Protein phosphatase 1K, mitochondrial (ppm1k), found in Xenopus laevis (African clawed frog).